The sequence spans 502 residues: Sporulation-specific protein 2 (502 aa).

Positions 1-56 are cleaved as a signal peptide; sequence MPIWKTQTFFTSISVIQIVNKETKVSTKKEKDSMLNQLNTILRFLFLFLQLIKSSA. Asn77, Asn135, Asn285, Asn303, Asn340, Asn343, and Asn355 each carry an N-linked (GlcNAc...) asparagine glycan. A disordered region spans residues 441-474; that stretch reads EGNVLGKQETDNDNGKKEKGKNGAKSQGSSKKME. Residues 448-461 are compositionally biased toward basic and acidic residues; the sequence is QETDNDNGKKEKGK. Asn475 is lipidated: GPI-anchor amidated asparagine. The propeptide at 476–502 is removed in mature form; it reads SAPKNIFIDAFKMSVYAVFTVLFSIIF.

The protein belongs to the SPS2 family.

The protein localises to the cell membrane. Involved in middle stages of meiosis. Redundant with SPS22 for the organization of the beta-glucan layer of the spore wall. The sequence is that of Sporulation-specific protein 2 (SPS2) from Saccharomyces cerevisiae (strain ATCC 204508 / S288c) (Baker's yeast).